The primary structure comprises 160 residues: Large ribosomal subunit protein uL30m (160 aa).

Residues 1-34 (MAGVLRSVFQRPPGRLQTVKKGAESLIGTEWIRH) constitute a mitochondrion transit peptide. Positions 45 to 64 (VFQPRPEDHEKYGGDPQNPH) are disordered.

Belongs to the universal ribosomal protein uL30 family. In terms of assembly, component of the mitochondrial ribosome large subunit (39S) which comprises a 16S rRNA and about 50 distinct proteins.

Its subcellular location is the mitochondrion. In Rattus norvegicus (Rat), this protein is Large ribosomal subunit protein uL30m (Mrpl30).